Here is a 595-residue protein sequence, read N- to C-terminus: Myb-like protein D (595 aa).

Disordered regions lie at residues 1 to 47 (MQQQ…NGLV), 55 to 74 (QQYQ…DEGE), 82 to 266 (DESQ…NNRK), and 319 to 445 (VLQK…IWTQ). A compositionally biased stretch (low complexity) spans 19 to 47 (DNYNNNNSNINTNNNNSINDYENQNNGLV). A compositionally biased stretch (acidic residues) spans 60-74 (DQNDSFDDDSMDEGE). 2 stretches are compositionally biased toward low complexity: residues 90–212 (NNNN…ENNN) and 225–264 (NNNN…NNNN). Over residues 324–348 (TLNRNRSRSRSRSNSRSHSRSRSRS) the composition is skewed to basic residues. Composition is skewed to low complexity over residues 349–368 (RSLS…YSRS) and 376–420 (NNNN…NNNN). Over residues 423–434 (RKSEDDNQDDGK) the composition is skewed to basic and acidic residues. Positions 435 to 489 (KKHRKNAIWTQEEDEKMAQLYNKYGKSWKAIHSHFDDKTREQVQSHGQYLIRIGK) constitute an HTH myb-type domain. Positions 462–485 (WKAIHSHFDDKTREQVQSHGQYLI) form a DNA-binding region, H-T-H motif. Residues 494 to 595 (HRDGRKERRK…NSSNYVNNDN (102 aa)) form a disordered region. The span at 517-595 (QQNQQNNNNN…NSSNYVNNDN (79 aa)) shows a compositional bias: low complexity.

It localises to the nucleus. This Dictyostelium discoideum (Social amoeba) protein is Myb-like protein D (mybD).